The chain runs to 478 residues: D-ribulose kinase (478 aa).

The N-terminal 38 residues, 1-38 (MLILRQFQISSFELFQSPKQTGFYSSSRSVPLPRTRFY), are a transit peptide targeting the chloroplast. Residues aspartate 60, 64 to 67 (SGGR), and aspartate 278 contribute to the substrate site. ATP contacts are provided by residues serine 300, glycine 338, and 433 to 437 (GGAKN).

The protein belongs to the FGGY kinase family. It depends on a divalent metal cation as a cofactor.

Its subcellular location is the plastid. It is found in the chloroplast. The catalysed reaction is D-ribulose + ATP = D-ribulose 5-phosphate + ADP + H(+). Its function is as follows. Exhibits ATP hydrolysis without substrate. Can phosphorylate D-ribulose with low efficiency. The protein is D-ribulose kinase of Arabidopsis thaliana (Mouse-ear cress).